The sequence spans 190 residues: Ribose 1,5-bisphosphate phosphokinase PhnN (190 aa).

The tract at residues 135 to 159 is disordered; that stretch reads RGREPEPGIGQRLARPDPAPGHQAD.

This sequence belongs to the ribose 1,5-bisphosphokinase family.

It carries out the reaction alpha-D-ribose 1,5-bisphosphate + ATP = 5-phospho-alpha-D-ribose 1-diphosphate + ADP. Its pathway is metabolic intermediate biosynthesis; 5-phospho-alpha-D-ribose 1-diphosphate biosynthesis; 5-phospho-alpha-D-ribose 1-diphosphate from D-ribose 5-phosphate (route II): step 3/3. Functionally, catalyzes the phosphorylation of ribose 1,5-bisphosphate to 5-phospho-D-ribosyl alpha-1-diphosphate (PRPP). In Pseudofrankia inefficax (strain DSM 45817 / CECT 9037 / DDB 130130 / EuI1c) (Frankia inefficax), this protein is Ribose 1,5-bisphosphate phosphokinase PhnN.